Reading from the N-terminus, the 110-residue chain is Large ribosomal subunit protein P1 (110 aa).

Blocked amino end (Ala) is present on alanine 2. Residues 69-83 (AAPAAGGAAAATEAP) are compositionally biased toward low complexity. The interval 69-110 (AAPAAGGAAAATEAPAAKEEKKEEKKEESEEEDEDMGFGLFD) is disordered. Positions 84 to 96 (AAKEEKKEEKKEE) are enriched in basic and acidic residues. Serine 97 is subject to Phosphoserine; in form eL12'-P.

As to quaternary structure, part of the ribosomal stalk of the large ribosomal subunit; P1 and P2 exist as dimers which assemble on the P0 scaffold. In terms of processing, phosphorylation of Ser-97 converts eL12' to eL12'-P.

Plays an important role in the elongation step of protein synthesis. The protein is Large ribosomal subunit protein P1 of Artemia salina (Brine shrimp).